The primary structure comprises 1067 residues: MTNFKFSLLACSIAFALNASTAYAAQPTNQPTNQPTNQPTNQPTNQPTNQNSNVSEQLEQINVSGSSENINIKEKKVGETQISAKKLAKQQASDSRDLVRYETGITVVETGRTGASGYAVRGVDENRVGIMVDGLRQAETLSSQGFKELFEGYGNFNNTRNSIEIENVKTATITKGADSLKSGSGALGGSVIFETKDARDYLIDKDYYLSYKRGYQTMNNQNLKTLTLAGRSKKFDILVVDTKRDGHEIENYDYKIYPNKQADLRAVGPTREKADPYQITRQSTLIKLGFQPNENHRLSVALDDSTLETKGIDLSYALRPYSTAGNEKYGERIINDQSKRKNIQFSYENFSQTPFWDHIKLSYSSQKITNKARSDEYCHQSTCPGVRNPQGLHLVEKDGTYRIVDKDNNDFHYKKDDSDLWAWGKELHNSKGKKISDDVDTKGGSLDSVLINCEKLDCSKRFRIYQEYDENSSEKYTYDDREIKVETLPNGKKYGKIPLKKGEKLFSQEEARFLFPKSHGYSTDFVNDRDLNTHTQQIKLDLDKEFHLWHTQHQLKYGGLYEKTLKSMVNHQYNTAANVQWWADYFFCARQEGGNLGGEKKPRPDISVAGCANGTLLHSDIGKDTYLIPVTTKNNVLYFGDNVQLTSWLGLDLNYRYDHVKYLPSYDKNIPVPKGLITGLFKKFKSTDYVYGKKYSKPDGYTDCTYDTPCYKQNFKDNLALLLRKTDYKHHSYNLGLNLDPTDWLRVQLKYANGFRAPTSDEIYMTFKHPQFSIQPNTDLKAETSKTKEVAFTFYKNSSYITLNAFQNDYRNFIDLVEVGERPIEEDSVVRYPFHQNQNRDRARVRGIEIASRLEIGDLFEKLQGFHLGYKFTYQKGRIKDNGLHPKYKEFLKLNKDQHPEYEAIARKPQPMNALQPTTSVYNIGYDAPSQKWGVDMYITNVAAKKAKDSFNSQWTSMVERKEKQYTDITDIKASKANGKEVKDSRGLWRNNRYTVIDTIAYWKPIKNLTFTAGVYNLTNKKYLTWDSARSIRHIGTINRVKTETGKGLNRFYAPGRNYRMSVQFEF.

Positions 1-24 (MTNFKFSLLACSIAFALNASTAYA) are cleaved as a signal peptide. 6 repeat units span residues 26–29 (QPTN), 30–33 (QPTN), 34–37 (QPTN), 38–41 (QPTN), 42–45 (QPTN), and 46–49 (QPTN). Residues 26 to 49 (QPTNQPTNQPTNQPTNQPTNQPTN) are 6 X 4 AA tandem repeats of Q-P-T-N. Over residues 26-51 (QPTNQPTNQPTNQPTNQPTNQPTNQN) the composition is skewed to low complexity. The disordered stretch occupies residues 26-53 (QPTNQPTNQPTNQPTNQPTNQPTNQNSN). The TonB box motif lies at 59–66 (EQINVSGS). Residues 71 to 196 (NIKEKKVGET…LGGSVIFETK (126 aa)) enclose the TBDR plug domain. The TBDR beta-barrel domain maps to 204–1067 (DKDYYLSYKR…NYRMSVQFEF (864 aa)). The short motif at 1050 to 1067 (NRFYAPGRNYRMSVQFEF) is the TonB C-terminal box element.

It belongs to the TonB-dependent receptor family. Hemoglobin/haptoglobin binding protein subfamily.

Its subcellular location is the cell outer membrane. In terms of biological role, acts as a receptor for hemoglobin or the hemoglobin/haptoglobin complex of the human host and is required for heme uptake. This is Hemoglobin and hemoglobin-haptoglobin-binding protein B (hgbB) from Haemophilus influenzae.